We begin with the raw amino-acid sequence, 262 residues long: 3-methyl-2-oxobutanoate hydroxymethyltransferase (262 aa).

2 residues coordinate Mg(2+): Asp43 and Asp82. Residues 43 to 44, Asp82, and Lys111 each bind 3-methyl-2-oxobutanoate; that span reads DS. Glu113 serves as a coordination point for Mg(2+). The active-site Proton acceptor is the Glu180.

It belongs to the PanB family. In terms of assembly, homodecamer; pentamer of dimers. Mg(2+) is required as a cofactor.

Its subcellular location is the cytoplasm. It catalyses the reaction 3-methyl-2-oxobutanoate + (6R)-5,10-methylene-5,6,7,8-tetrahydrofolate + H2O = 2-dehydropantoate + (6S)-5,6,7,8-tetrahydrofolate. It participates in cofactor biosynthesis; coenzyme A biosynthesis. Its function is as follows. Catalyzes the reversible reaction in which hydroxymethyl group from 5,10-methylenetetrahydrofolate is transferred onto alpha-ketoisovalerate to form ketopantoate. The sequence is that of 3-methyl-2-oxobutanoate hydroxymethyltransferase from Pyrobaculum aerophilum (strain ATCC 51768 / DSM 7523 / JCM 9630 / CIP 104966 / NBRC 100827 / IM2).